The chain runs to 338 residues: Phosphoribosylformylglycinamidine cyclo-ligase (338 aa).

The protein belongs to the AIR synthase family.

Its subcellular location is the cytoplasm. The catalysed reaction is 2-formamido-N(1)-(5-O-phospho-beta-D-ribosyl)acetamidine + ATP = 5-amino-1-(5-phospho-beta-D-ribosyl)imidazole + ADP + phosphate + H(+). It participates in purine metabolism; IMP biosynthesis via de novo pathway; 5-amino-1-(5-phospho-D-ribosyl)imidazole from N(2)-formyl-N(1)-(5-phospho-D-ribosyl)glycinamide: step 2/2. In Thermoplasma volcanium (strain ATCC 51530 / DSM 4299 / JCM 9571 / NBRC 15438 / GSS1), this protein is Phosphoribosylformylglycinamidine cyclo-ligase.